The sequence spans 308 residues: Spermidine synthase 1 (308 aa).

In terms of domain architecture, PABS spans 17–254; the sequence is PGWFSEISPL…GVIGFMLCST (238 aa). Gln-48 contributes to the S-adenosyl 3-(methylsulfanyl)propylamine binding site. Residue Tyr-78 participates in putrescine binding. S-adenosyl 3-(methylsulfanyl)propylamine-binding positions include Gln-79, Asp-103, Glu-123, 154-155, and Asp-173; that span reads DG. The active-site Proton acceptor is the Asp-173. Putrescine contacts are provided by residues 173 to 176 and Tyr-242; that span reads DSSD.

This sequence belongs to the spermidine/spermine synthase family.

The enzyme catalyses S-adenosyl 3-(methylsulfanyl)propylamine + putrescine = S-methyl-5'-thioadenosine + spermidine + H(+). It functions in the pathway amine and polyamine biosynthesis; spermidine biosynthesis; spermidine from putrescine: step 1/1. In Datura stramonium (Jimsonweed), this protein is Spermidine synthase 1.